A 252-amino-acid polypeptide reads, in one-letter code: Hydroxyacylglutathione hydrolase (252 aa).

Zn(2+) is bound by residues His-54, His-56, Asp-58, His-59, His-111, Asp-130, and His-170.

This sequence belongs to the metallo-beta-lactamase superfamily. Glyoxalase II family. As to quaternary structure, monomer. Requires Zn(2+) as cofactor.

It catalyses the reaction an S-(2-hydroxyacyl)glutathione + H2O = a 2-hydroxy carboxylate + glutathione + H(+). It functions in the pathway secondary metabolite metabolism; methylglyoxal degradation; (R)-lactate from methylglyoxal: step 2/2. Its function is as follows. Thiolesterase that catalyzes the hydrolysis of S-D-lactoyl-glutathione to form glutathione and D-lactic acid. The polypeptide is Hydroxyacylglutathione hydrolase (Francisella philomiragia subsp. philomiragia (strain ATCC 25017 / CCUG 19701 / FSC 153 / O#319-036)).